Reading from the N-terminus, the 517-residue chain is Ribose import ATP-binding protein RbsA (517 aa).

ABC transporter domains follow at residues 11–251 (LEMR…VGRD) and 263–507 (YDPG…ALAT). An ATP-binding site is contributed by 43–50 (GENGAGKS).

This sequence belongs to the ABC transporter superfamily. Ribose importer (TC 3.A.1.2.1) family. In terms of assembly, the complex is composed of an ATP-binding protein (RbsA), two transmembrane proteins (RbsC) and a solute-binding protein (RbsB).

The protein localises to the cell inner membrane. The catalysed reaction is D-ribose(out) + ATP + H2O = D-ribose(in) + ADP + phosphate + H(+). Part of the ABC transporter complex RbsABC involved in ribose import. Responsible for energy coupling to the transport system. In Burkholderia pseudomallei (strain K96243), this protein is Ribose import ATP-binding protein RbsA.